Here is a 329-residue protein sequence, read N- to C-terminus: Methionyl-tRNA formyltransferase (329 aa).

Residue 117–120 participates in (6S)-5,6,7,8-tetrahydrofolate binding; that stretch reads SLLP.

It belongs to the Fmt family.

It carries out the reaction L-methionyl-tRNA(fMet) + (6R)-10-formyltetrahydrofolate = N-formyl-L-methionyl-tRNA(fMet) + (6S)-5,6,7,8-tetrahydrofolate + H(+). In terms of biological role, attaches a formyl group to the free amino group of methionyl-tRNA(fMet). The formyl group appears to play a dual role in the initiator identity of N-formylmethionyl-tRNA by promoting its recognition by IF2 and preventing the misappropriation of this tRNA by the elongation apparatus. The protein is Methionyl-tRNA formyltransferase of Paracidovorax citrulli (strain AAC00-1) (Acidovorax citrulli).